Consider the following 124-residue polypeptide: Apolipoprotein C-IV (124 aa).

The first 27 residues, 1–27, serve as a signal peptide directing secretion; the sequence is MLLPRRGLRTLPSLCLYILVLVWVVAC.

It belongs to the apolipoprotein C4 family. Glycosylated; contains sialic acid. Present in up to five sialylated isoforms. In terms of tissue distribution, blood plasma, associated primarily with VLDL and HDL. Expressed mainly in the liver.

It localises to the secreted. Functionally, may participate in lipoprotein metabolism. This is Apolipoprotein C-IV (APOC4) from Oryctolagus cuniculus (Rabbit).